The sequence spans 309 residues: Porphobilinogen deaminase (309 aa).

At Cys244 the chain carries S-(dipyrrolylmethanemethyl)cysteine.

The protein belongs to the HMBS family. Monomer. It depends on dipyrromethane as a cofactor.

The catalysed reaction is 4 porphobilinogen + H2O = hydroxymethylbilane + 4 NH4(+). The protein operates within porphyrin-containing compound metabolism; protoporphyrin-IX biosynthesis; coproporphyrinogen-III from 5-aminolevulinate: step 2/4. In terms of biological role, tetrapolymerization of the monopyrrole PBG into the hydroxymethylbilane pre-uroporphyrinogen in several discrete steps. This is Porphobilinogen deaminase from Listeria welshimeri serovar 6b (strain ATCC 35897 / DSM 20650 / CCUG 15529 / CIP 8149 / NCTC 11857 / SLCC 5334 / V8).